The chain runs to 150 residues: Arginine repressor (150 aa).

Belongs to the ArgR family.

The protein resides in the cytoplasm. It functions in the pathway amino-acid biosynthesis; L-arginine biosynthesis [regulation]. Regulates arginine biosynthesis genes. This Clostridium beijerinckii (strain ATCC 51743 / NCIMB 8052) (Clostridium acetobutylicum) protein is Arginine repressor.